The primary structure comprises 377 residues: Naringenin,2-oxoglutarate 3-dioxygenase (377 aa).

One can recognise a Fe2OG dioxygenase domain in the interval 193 to 297 (CVDMDQKVVV…RLSIATFQNP (105 aa)). Fe cation is bound by residues His220, Asp222, and His278. Arg288 is a binding site for 2-oxoglutarate.

Belongs to the iron/ascorbate-dependent oxidoreductase family. Requires Fe(2+) as cofactor. L-ascorbate serves as cofactor.

The catalysed reaction is a (2S)-flavan-4-one + 2-oxoglutarate + O2 = a (2R,3R)-dihydroflavonol + succinate + CO2. It functions in the pathway secondary metabolite biosynthesis; flavonoid biosynthesis. Its function is as follows. Catalyzes the 3-beta-hydroxylation of 2S-flavanones to 2R,3R-dihydroflavonols which are intermediates in the biosynthesis of flavonols, anthocyanidins, catechins and proanthocyanidins in plants. The sequence is that of Naringenin,2-oxoglutarate 3-dioxygenase from Hordeum vulgare (Barley).